A 900-amino-acid chain; its full sequence is 3'-5' exonuclease DinG (900 aa).

The Exonuclease domain maps to Val-8–Leu-161. In terms of domain architecture, Helicase ATP-binding spans Ser-241 to Arg-496. Position 276–283 (Ala-276–Ser-283) interacts with ATP. The short motif at Asp-448–His-451 is the DEAH box element. Residues Asp-713 to Gln-893 form the Helicase C-terminal domain.

Belongs to the helicase family. DinG subfamily. Type 2 sub-subfamily.

In terms of biological role, 3'-5' exonuclease. The polypeptide is 3'-5' exonuclease DinG (Staphylococcus haemolyticus (strain JCSC1435)).